Here is a 455-residue protein sequence, read N- to C-terminus: Cysteinylglycine-S-conjugate dipeptidase (455 aa).

His92 contacts Zn(2+). Asp94 is a catalytic residue. Asp125 contributes to the Zn(2+) binding site. The Proton acceptor role is filled by Glu158. Positions 159, 163, and 428 each coordinate Zn(2+).

Belongs to the peptidase M20F family. Zn(2+) is required as a cofactor.

The catalysed reaction is an S-substituted L-cysteinylglycine + H2O = an S-substituted L-cysteine + glycine. It carries out the reaction S-(1-hydroxy-3-methylhexan-3-yl)-L-cysteinylglycine + H2O = S-(1-hydroxy-3-methylhexan-3-yl)-L-cysteine + glycine. The enzyme catalyses S-benzyl-L-cysteinylglycine + H2O = S-benzyl-L-cysteine + glycine. In terms of biological role, metallopeptidase that hydrolyzes the Cys-Gly bond of Cys-Gly-S-conjugates. Involved in the formation of the human body odorant 3-methyl-3-sulfanylhexan-1-ol (3M3SH) from odorless axilla secretions. Catalyzes the hydrolysis of the Cys-Gly bond of the Cys-Gly-S-conjugate of 3M3SH, a key precursor secreted by apocrine glands in human axilla skin. The Cys-S-conjugate obtained is then cleaved by the Cys-S-conjugate beta-lyase MetC, which finally releases 3M3SH. The sequence is that of Cysteinylglycine-S-conjugate dipeptidase from Corynebacterium striatum.